The primary structure comprises 335 residues: Fimbrial adhesin PapGIII (335 aa).

The N-terminal stretch at Met-1–Ala-21 is a signal peptide.

It belongs to the adhesin PapG family.

It is found in the secreted. It localises to the fimbrium. In terms of biological role, tip adhesin component of type P pili that binds preferentially to Gal-alpha(1-4)-Gal-containing glycolipids such as globoside. This tip is common in E.coli strains that cause human cystitis, but rare in pyelonephritic isolates. This is Fimbrial adhesin PapGIII from Escherichia coli.